Consider the following 224-residue polypeptide: RNA-binding protein 24-B (224 aa).

One can recognise an RRM domain in the interval 11–88 (TKIFVGGLPY…RKANVNLAYL (78 aa)).

The protein resides in the nucleus. The protein localises to the cytoplasm. In terms of biological role, multifunctional RNA-binding protein involved in the regulation of pre-mRNA splicing, mRNA stability and mRNA translation important for cell fate decision and differentiation. Plays a major role in pre-mRNA alternative splicing regulation. Mediates preferentially muscle-specific exon inclusion in numerous mRNAs important for striated cardiac and skeletal muscle cell differentiation. Binds to intronic splicing enhancer (ISE) composed of stretches of GU-rich motifs localized in flanking intron of exon that will be included by alternative splicing. Involved in embryonic stem cell (ESC) transition to cardiac cell differentiation by promoting pre-mRNA alternative splicing events of several pluripotency and/or differentiation genes. Plays a role in the regulation of mRNA stability and mRNA translation to which it is bound. Involved in myogenic differentiation by regulating myog levels. Binds to a huge amount of mRNAs. Required for embryonic heart development, sarcomer and M-band formation in striated muscles. The protein is RNA-binding protein 24-B (rbm24-b) of Xenopus laevis (African clawed frog).